The primary structure comprises 900 residues: Nitrate reductase [NADH] (900 aa).

A Mo-molybdopterin-binding site is contributed by cysteine 172. The Cytochrome b5 heme-binding domain occupies 521 to 596 (TKMYSLSEVK…LEDYRVGELI (76 aa)). Residues histidine 556 and histidine 579 each coordinate heme. In terms of domain architecture, FAD-binding FR-type spans 644 to 756 (REKIPCKLIS…KGPLGHIEYT (113 aa)). Residues 696-699 (RAYT), 713-717 (VVKVY), phenylalanine 718, phenylalanine 725, 730-732 (AMS), and threonine 783 contribute to the FAD site.

This sequence belongs to the nitrate reductase family. In terms of assembly, homodimer. FAD serves as cofactor. Requires heme as cofactor. The cofactor is Mo-molybdopterin.

It carries out the reaction nitrite + NAD(+) + H2O = nitrate + NADH + H(+). Functionally, nitrate reductase is a key enzyme involved in the first step of nitrate assimilation in plants, fungi and bacteria. This chain is Nitrate reductase [NADH] (NIA), found in Lotus japonicus (Lotus corniculatus var. japonicus).